Here is a 365-residue protein sequence, read N- to C-terminus: Pheromone M-factor receptor (365 aa).

A run of 7 helical transmembrane segments spans residues 7 to 24, 31 to 54, 73 to 100, 116 to 133, 155 to 182, 204 to 226, and 265 to 283; these read FYQF…PILY, NIPC…ESAI, ITSR…DTVI, VCLS…MVPL, YTLL…VVLY, FLRL…IFMV, and VPPT…SGGW.

It belongs to the G-protein coupled receptor 4 family.

Its subcellular location is the membrane. Receptor for the peptide pheromone M-factor, a mating factor of S.pombe. Pheromone signaling is essential for initiation of meiosis in S.pombe; M-factor signaling alone may be sufficient. The protein is Pheromone M-factor receptor (map3) of Schizosaccharomyces pombe (strain 972 / ATCC 24843) (Fission yeast).